A 293-amino-acid chain; its full sequence is Protease HtpX (293 aa).

The next 2 membrane-spanning stretches (helical) occupy residues 4 to 24 (IALF…VLSL) and 34 to 54 (GLMI…LLMS). Histidine 139 contributes to the Zn(2+) binding site. Glutamate 140 is an active-site residue. Residue histidine 143 participates in Zn(2+) binding. 2 helical membrane passes run 158–178 (VVNT…AGFM) and 193–213 (LIYF…ASII). A Zn(2+)-binding site is contributed by glutamate 222.

The protein belongs to the peptidase M48B family. Zn(2+) serves as cofactor.

It localises to the cell inner membrane. In Escherichia fergusonii (strain ATCC 35469 / DSM 13698 / CCUG 18766 / IAM 14443 / JCM 21226 / LMG 7866 / NBRC 102419 / NCTC 12128 / CDC 0568-73), this protein is Protease HtpX.